Consider the following 295-residue polypeptide: HTH-type transcriptional regulator TdfR (295 aa).

The HTH lysR-type domain occupies Met-1–Thr-58. The segment at residues Val-18–His-37 is a DNA-binding region (H-T-H motif).

Belongs to the LysR transcriptional regulatory family.

Its subcellular location is the cytoplasm. Involved in the regulation of 3-chlorocatechol degradation. Transcriptional regulator of tfdB expression. Acts as a repressor in the absence of its effector (either 2-cis-chlorodiene lactone or chloromaleylacetate) but acts as an activator when its effector is present. This Cupriavidus pinatubonensis (strain JMP 134 / LMG 1197) (Cupriavidus necator (strain JMP 134)) protein is HTH-type transcriptional regulator TdfR (tfdR).